A 263-amino-acid chain; its full sequence is NADH dehydrogenase [ubiquinone] iron-sulfur protein 3, mitochondrial (263 aa).

A mitochondrion-targeting transit peptide spans 1 to 35 (MVAAVARLWWRGLLGASALTRGAGRPSVLLLPVRR).

It belongs to the complex I 30 kDa subunit family. In terms of assembly, core subunit of respiratory chain NADH dehydrogenase (Complex I) which is composed of 45 different subunits. Interacts with NDUFAF3. Interacts with RAB5IF. Found in subcomplexes containing subunits NDUFS2, MT-ND1 and NDUFA13.

It localises to the mitochondrion inner membrane. It catalyses the reaction a ubiquinone + NADH + 5 H(+)(in) = a ubiquinol + NAD(+) + 4 H(+)(out). Functionally, core subunit of the mitochondrial membrane respiratory chain NADH dehydrogenase (Complex I) which catalyzes electron transfer from NADH through the respiratory chain, using ubiquinone as an electron acceptor. Essential for the catalytic activity and assembly of complex I. The protein is NADH dehydrogenase [ubiquinone] iron-sulfur protein 3, mitochondrial (NDUFS3) of Pongo pygmaeus (Bornean orangutan).